Reading from the N-terminus, the 691-residue chain is Zinc finger protein 770 (691 aa).

Lys11 is covalently cross-linked (Glycyl lysine isopeptide (Lys-Gly) (interchain with G-Cter in SUMO2)). C2H2-type zinc fingers lie at residues 27–49 (YVCN…YLIH), 55–77 (FECD…QLTH), and 81–103 (FKCS…QQLH). Glycyl lysine isopeptide (Lys-Gly) (interchain with G-Cter in SUMO2) cross-links involve residues Lys112, Lys121, and Lys146. 3 C2H2-type zinc fingers span residues 160–182 (HACT…VLIH), 188–210 (FKCV…QLTH), and 216–238 (FQCC…KQIH). A disordered region spans residues 258–277 (PLPNKLNANQGGFENGEIGE). Lys262 participates in a covalent cross-link: Glycyl lysine isopeptide (Lys-Gly) (interchain with G-Cter in SUMO2). A C2H2-type 7; degenerate zinc finger spans residues 294-318 (FQCPKCEKCFESEQILNEHSCFAAR). Residues Lys420 and Lys437 each participate in a glycyl lysine isopeptide (Lys-Gly) (interchain with G-Cter in SUMO2) cross-link. 4 C2H2-type zinc fingers span residues 475–497 (CPCD…YLIH), 503–525 (FGCN…EQTH), 625–647 (YRCS…YLIH), and 653–675 (FECS…QLTH). Residue Lys683 forms a Glycyl lysine isopeptide (Lys-Gly) (interchain with G-Cter in SUMO2) linkage.

The protein belongs to the krueppel C2H2-type zinc-finger protein family.

It is found in the nucleus. Its function is as follows. May be involved in transcriptional regulation. The chain is Zinc finger protein 770 (ZNF770) from Homo sapiens (Human).